The following is a 305-amino-acid chain: tRNA dimethylallyltransferase (305 aa).

Position 12 to 19 (12 to 19 (GPTASGKT)) interacts with ATP. 14-19 (TASGKT) serves as a coordination point for substrate. 3 interaction with substrate tRNA regions span residues 37-40 (DSAL), 161-165 (QRLAR), and 242-247 (RCVGYR).

The protein belongs to the IPP transferase family. As to quaternary structure, monomer. It depends on Mg(2+) as a cofactor.

It catalyses the reaction adenosine(37) in tRNA + dimethylallyl diphosphate = N(6)-dimethylallyladenosine(37) in tRNA + diphosphate. In terms of biological role, catalyzes the transfer of a dimethylallyl group onto the adenine at position 37 in tRNAs that read codons beginning with uridine, leading to the formation of N6-(dimethylallyl)adenosine (i(6)A). This chain is tRNA dimethylallyltransferase, found in Psychromonas ingrahamii (strain DSM 17664 / CCUG 51855 / 37).